Here is a 717-residue protein sequence, read N- to C-terminus: Delta-1-pyrroline-5-carboxylate synthase A (717 aa).

The tract at residues 1-296 (MEELDRSRAF…WAPITDSNAR (296 aa)) is glutamate 5-kinase. Residues Ser60, Asp157, and Asn176 each contribute to the substrate site. ATP is bound by residues 196 to 197 (SD) and 236 to 242 (RGGMTAK). The segment at 297 to 717 (DMAVAARESS…YTHQDIPIQA (421 aa)) is gamma-glutamyl phosphate reductase.

It in the N-terminal section; belongs to the glutamate 5-kinase family. The protein in the C-terminal section; belongs to the gamma-glutamyl phosphate reductase family.

It carries out the reaction L-glutamate + ATP = L-glutamyl 5-phosphate + ADP. The enzyme catalyses L-glutamate 5-semialdehyde + phosphate + NADP(+) = L-glutamyl 5-phosphate + NADPH + H(+). It participates in amino-acid biosynthesis; L-proline biosynthesis; L-glutamate 5-semialdehyde from L-glutamate: step 1/2. Its pathway is amino-acid biosynthesis; L-proline biosynthesis; L-glutamate 5-semialdehyde from L-glutamate: step 2/2. In terms of biological role, P5CS plays a key role in proline biosynthesis, leading to osmoregulation in plants. The sequence is that of Delta-1-pyrroline-5-carboxylate synthase A (P5CSA) from Arabidopsis thaliana (Mouse-ear cress).